A 240-amino-acid chain; its full sequence is Cysteine-rich venom protein triflin (240 aa).

The N-terminal stretch at 1–19 (MIAFIVLPILAAVLQQSSG) is a signal peptide. The region spanning 39–166 (DLHNSLRRSV…KYSYFYVCQY (128 aa)) is the SCP domain. Intrachain disulfides connect C75/C153, C92/C167, C148/C164, C186/C193, C189/C198, C202/C235, C211/C229, and C220/C233. Residues 202–235 (CTRENEFTNCDSLVQKSSCQDNYMKSKCPASCFC) form the ShKT domain.

This sequence belongs to the CRISP family. Forms a stable, non-covalent complex with SSP-2. In terms of tissue distribution, expressed by the venom gland.

Its subcellular location is the secreted. In terms of biological role, blocks contraction of smooth muscle elicited by high potassium-induced depolarization. May target voltage-gated calcium channels (Cav) on smooth muscle. This is Cysteine-rich venom protein triflin from Protobothrops flavoviridis (Habu).